A 192-amino-acid polypeptide reads, in one-letter code: 4'-phosphopantetheinyl transferase AcpT (192 aa).

Belongs to the P-Pant transferase superfamily. Gsp/Sfp/HetI/AcpT family.

It catalyses the reaction apo-[ACP] + CoA = holo-[ACP] + adenosine 3',5'-bisphosphate + H(+). Functionally, may be involved in an alternative pathway for phosphopantetheinyl transfer and holo-ACP synthesis. The native apo-protein substrate is unknown. In Salmonella typhi, this protein is 4'-phosphopantetheinyl transferase AcpT (acpT).